Here is a 1796-residue protein sequence, read N- to C-terminus: U3 small nucleolar RNA-associated protein 10 (1796 aa).

12 HEAT repeats span residues 586–623 (LDLQ…SNAE), 656–692 (LLQE…SATG), 861–898 (DLTT…SDHS), 983–1021 (DTSV…TAPD), 1052–1089 (QTIK…AYEH), 1161–1198 (QPKP…VLSS), 1258–1295 (LSIG…QESN), 1302–1340 (TVLL…KYGK), 1344–1383 (EAVA…VLQD), 1492–1529 (SAVE…SALD), 1711–1748 (DHRK…TLGE), and 1752–1789 (EMLS…ILGE). The interval 881–901 (TTDSPATKRRRTSSSDHSRGV) is disordered.

It belongs to the HEATR1/UTP10 family. Component of the ribosomal small subunit (SSU) processome.

The protein localises to the nucleus. The protein resides in the nucleolus. In terms of biological role, involved in nucleolar processing of pre-18S ribosomal RNA. Involved in ribosome biosynthesis. This Pyricularia oryzae (strain 70-15 / ATCC MYA-4617 / FGSC 8958) (Rice blast fungus) protein is U3 small nucleolar RNA-associated protein 10.